Consider the following 1189-residue polypeptide: Phosphatidylinositol 3,4,5-trisphosphate 5-phosphatase 1 (1189 aa).

The SH2 domain maps to 5–101 (WNHGNITRSK…GLVTHLQYPV (97 aa)). Over residues 103-117 (LEEEDTGDDPEEDTV) the composition is skewed to acidic residues. Residues 103–132 (LEEEDTGDDPEEDTVESVVSPPELPPRNIP) are disordered. Residues 124 to 129 (PELPPR) carry the SH3-binding 1 motif. Ser-243 is subject to Phosphoserine. The tract at residues 870-906 (TERDESSGPKTLKSLTSHDPMKQWEVTSRAPPCSGSS) is disordered. Positions 912–915 (NPNY) match the NPXY motif 1 motif. Phosphotyrosine is present on Tyr-915. The tract at residues 922–1189 (GPPMPLHVKQ…PGPLGRTAMQ (268 aa)) is disordered. Residues 931–943 (QTLSPDQQPTAWS) are compositionally biased toward polar residues. At Ser-934 the chain carries Phosphoserine. At Tyr-944 the chain carries Phosphotyrosine. Ser-960 carries the phosphoserine modification. Positions 961–971 (PPTPPGQPPIS) are enriched in pro residues. Thr-963 carries the post-translational modification Phosphothreonine. Positions 969–974 (PISPKK) match the SH3-binding 2 motif. The residue at position 971 (Ser-971) is a Phosphoserine. The interaction with DAB2 stretch occupies residues 1016-1030 (MFENPLYGSLSSFPK). The NPXY motif 2 signature appears at 1019-1022 (NPLY). Tyr-1022 carries the phosphotyrosine modification. Over residues 1033-1047 (PRKDQESPKMPRKEP) the composition is skewed to basic and acidic residues. The short motif at 1040–1051 (PKMPRKEPPPCP) is the SH3-binding 3 element. Pro residues predominate over residues 1134–1145 (PPTPTPRPPLPV). Basic and acidic residues predominate over residues 1157-1177 (KGRDYRDNTELPHHGKHRPEE).

This sequence belongs to the inositol 1,4,5-trisphosphate 5-phosphatase family. Interacts with tyrosine phosphorylated form of SHC1. Interacts with tyrosine phosphorylated form of DOK1. Interacts with tyrosine phosphorylated form of DOK3. Interacts with tyrosine phosphorylated form of SLAMF1/CD150. Interacts with PTPN11 in response to IL-3. Interacts with receptor EPOR. Interacts with receptors MS4A2/FCER1B and FCER1G. Interacts with receptors FCGR2B and FCGR3. Interacts with receptor FCGR2A, leading to regulate gene expression during the phagocytic process. Interacts with GRB2. Interacts with PLCG1. Interacts with tyrosine kinases SRC and TEC. Interacts with c-Met/MET. Interacts with MILR1 (tyrosine-phosphorylated). Can weakly interact (via NPXY motif 2) with DAB2 (via PID domain); the interaction is impaired by tyrosine phosphorylation of the NPXY motif. Interacts with FCRL3 and FCRL6 (tyrosine phosphorylated form). Interacts (via SH2 domain) with tyrosine phosphorylated KLRC1 (via ITIM). Interacts with MPL/TPOR. In terms of processing, tyrosine phosphorylated by the members of the SRC family after exposure to a diverse array of extracellular stimuli such as cytokines, growth factors, antibodies, chemokines, integrin ligands and hypertonic and oxidative stress. Phosphorylated upon IgG receptor FCGR2B-binding. Specifically expressed in immune and hematopoietic cells. Expressed in bone marrow and blood cells. Levels vary considerably within this compartment. Present in at least 74% of immature CD34+ cells, whereas within the more mature population of CD33+ cells, it is present in only 10% of cells. Present in the majority of T-cells, while it is present in a minority of B-cells (at protein level).

It localises to the cytoplasm. It is found in the cell membrane. The protein resides in the membrane raft. Its subcellular location is the cytoskeleton. The protein localises to the membrane. The enzyme catalyses a 1,2-diacyl-sn-glycero-3-phospho-(1D-myo-inositol-3,4,5-trisphosphate) + H2O = a 1,2-diacyl-sn-glycero-3-phospho-(1D-myo-inositol-3,4-bisphosphate) + phosphate. It catalyses the reaction 1D-myo-inositol 1,3,4,5-tetrakisphosphate + H2O = 1D-myo-inositol 1,3,4-trisphosphate + phosphate. It carries out the reaction a 1,2-diacyl-sn-glycero-3-phospho-(1D-myo-inositol-4,5-bisphosphate) + H2O = a 1,2-diacyl-sn-glycero-3-phospho-(1D-myo-inositol 4-phosphate) + phosphate. With respect to regulation, activated upon translocation to the sites of synthesis of PtdIns(3,4,5)P3 in the membrane. Functionally, phosphatidylinositol (PtdIns) phosphatase that specifically hydrolyzes the 5-phosphate of phosphatidylinositol-3,4,5-trisphosphate (PtdIns(3,4,5)P3) to produce PtdIns(3,4)P2, thereby negatively regulating the PI3K (phosphoinositide 3-kinase) pathways. Able also to hydrolyzes the 5-phosphate of phosphatidylinositol-4,5-bisphosphate (PtdIns(4,5)P3) and inositol 1,3,4,5-tetrakisphosphate. Acts as a negative regulator of B-cell antigen receptor signaling. Mediates signaling from the FC-gamma-RIIB receptor (FCGR2B), playing a central role in terminating signal transduction from activating immune/hematopoietic cell receptor systems. Acts as a negative regulator of myeloid cell proliferation/survival and chemotaxis, mast cell degranulation, immune cells homeostasis, integrin alpha-IIb/beta-3 signaling in platelets and JNK signaling in B-cells. Regulates proliferation of osteoclast precursors, macrophage programming, phagocytosis and activation and is required for endotoxin tolerance. Involved in the control of cell-cell junctions, CD32a signaling in neutrophils and modulation of EGF-induced phospholipase C activity. Key regulator of neutrophil migration, by governing the formation of the leading edge and polarization required for chemotaxis. Modulates FCGR3/CD16-mediated cytotoxicity in NK cells. Mediates the activin/TGF-beta-induced apoptosis through its Smad-dependent expression. In Homo sapiens (Human), this protein is Phosphatidylinositol 3,4,5-trisphosphate 5-phosphatase 1 (INPP5D).